Consider the following 320-residue polypeptide: ATP-dependent 6-phosphofructokinase isozyme 1 (320 aa).

Glycine 12 is an ATP binding site. ADP is bound by residues arginine 22–arginine 26 and arginine 55–aspartate 60. ATP contacts are provided by residues arginine 73–phenylalanine 74 and glycine 103–serine 106. Aspartate 104 contributes to the Mg(2+) binding site. Threonine 126–aspartate 128 is a binding site for substrate. The active-site Proton acceptor is the aspartate 128. Arginine 155 serves as a coordination point for ADP. Residues arginine 163 and methionine 170–arginine 172 contribute to the substrate site. Residues glycine 186 to glutamate 188, lysine 212, and lysine 214 to histidine 216 each bind ADP. Residues glutamate 223, arginine 244, and histidine 250–arginine 253 contribute to the substrate site.

This sequence belongs to the phosphofructokinase type A (PFKA) family. ATP-dependent PFK group I subfamily. Prokaryotic clade 'B1' sub-subfamily. Homotetramer. The cofactor is Mg(2+).

Its subcellular location is the cytoplasm. The catalysed reaction is beta-D-fructose 6-phosphate + ATP = beta-D-fructose 1,6-bisphosphate + ADP + H(+). It functions in the pathway carbohydrate degradation; glycolysis; D-glyceraldehyde 3-phosphate and glycerone phosphate from D-glucose: step 3/4. With respect to regulation, allosterically activated by ADP and other diphosphonucleosides, and allosterically inhibited by phosphoenolpyruvate. Catalyzes the phosphorylation of D-fructose 6-phosphate to fructose 1,6-bisphosphate by ATP, the first committing step of glycolysis. This Escherichia coli O6:H1 (strain CFT073 / ATCC 700928 / UPEC) protein is ATP-dependent 6-phosphofructokinase isozyme 1.